A 295-amino-acid chain; its full sequence is Malonyl-[acyl-carrier protein] O-methyltransferase (295 aa).

Belongs to the methyltransferase superfamily.

The enzyme catalyses malonyl-[ACP] + S-adenosyl-L-methionine = malonyl-[ACP] methyl ester + S-adenosyl-L-homocysteine. It functions in the pathway cofactor biosynthesis; biotin biosynthesis. Converts the free carboxyl group of a malonyl-thioester to its methyl ester by transfer of a methyl group from S-adenosyl-L-methionine (SAM). It allows to synthesize pimeloyl-ACP via the fatty acid synthetic pathway. The sequence is that of Malonyl-[acyl-carrier protein] O-methyltransferase from Halorhodospira halophila (strain DSM 244 / SL1) (Ectothiorhodospira halophila (strain DSM 244 / SL1)).